A 700-amino-acid chain; its full sequence is Centrosomal protein of 63 kDa (700 aa).

M1 carries the post-translational modification N-acetylmethionine. 2 coiled-coil regions span residues 73-283 (KEVG…ETFI) and 343-533 (LQAE…MCKK). Phosphoserine is present on residues S278, K488, and L492. A disordered region spans residues 570 to 603 (QYKTGHHSPRGQTLDSIDPVARGPSPLSSHISPG). Positions 593–603 (PSPLSSHISPG) are enriched in low complexity.

The protein belongs to the CEP63 family. As to quaternary structure, interacts with CEP152 and CDK1; these interactions recruit both ligands to centrosomes. Interacts with CDK2, CDK5RAP2, WDR62, CEP90, KIAA0753/moonraker and CCDC14. CEP63, CDK5RAP2, CEP152, WDR62 are proposed to form a stepwise assembled complex at the centrosome forming a ring near parental centrioles. Interacts with CCDC57; the interaction is required for their location to proximal end of centrioles. Interacts with FXR1; promoting its stabilization. Post-translationally, polyubiquitinated via 'Lys-48'-linked ubiquitin, leading to its degradation. Deubiquitinated by USP36, promoting its stabilization.

Its subcellular location is the cytoplasm. The protein localises to the cytoskeleton. It localises to the microtubule organizing center. The protein resides in the centrosome. It is found in the centriole. Its subcellular location is the centriolar satellite. Required for normal spindle assembly. Plays a key role in mother-centriole-dependent centriole duplication; the function also seems to involve CEP152, CDK5RAP2 and WDR62 through a stepwise assembled complex at the centrosome that recruits CDK2 required for centriole duplication. Reported to be required for centrosomal recruitment of CEP152; however, this function has been questioned. Also recruits CDK1 to centrosomes. Plays a role in DNA damage response. Following DNA damage, such as double-strand breaks (DSBs), is removed from centrosomes; this leads to the inactivation of spindle assembly and delay in mitotic progression. Promotes stabilization of FXR1 protein by inhibiting FXR1 ubiquitination. The protein is Centrosomal protein of 63 kDa of Mus musculus (Mouse).